We begin with the raw amino-acid sequence, 489 residues long: Transcription factor TGAL11 (489 aa).

Residues 87 to 99 (AATATATARPPAT) show a composition bias toward low complexity. The disordered stretch occupies residues 87–181 (AATATATARP…SDHRMTKTLD (95 aa)). Residues 121–139 (SNVTADTTDSESSSKNNGD) show a composition bias toward polar residues. Residues 148-159 (ASQFDQIPQQQQ) are compositionally biased toward low complexity. Residues 171–181 (HSDHRMTKTLD) are compositionally biased toward basic and acidic residues. Residues 181-225 (DPKIMRRLAQNREAARKSRLRKKAYIQQLESSKLRLAQMEQDLER) enclose the bZIP domain. The segment at 183-203 (KIMRRLAQNREAARKSRLRKK) is basic motif. Residues 209–223 (LESSKLRLAQMEQDL) form a leucine-zipper region. The DOG1 domain occupies 245-460 (AAMFDAEYGR…RALSSLWASR (216 aa)).

It belongs to the bZIP family.

It localises to the nucleus. In terms of biological role, transcriptional regulator involved in defense response. The sequence is that of Transcription factor TGAL11 from Oryza sativa subsp. japonica (Rice).